The chain runs to 346 residues: MDSNSNNTKSIKRKVVDQLVEGYEFATQLQLLLSHQHSNQYHIDETRLVSGSGSVSGGPDPVDELMSKILGSFHKTISVLDSFDPVAVSVPIAVEGSWNASCGDDSATPVSCNGGDSGESKKKRLGVGKGKRGCYTRKTRSHTRIVEAKSSEDRYAWRKYGQKEILNTTFPRSYFRCTHKPTQGCKATKQVQKQDQDSEMFQITYIGYHTCTANDQTHAKTEPFDQEIIMDSEKTLAASTAQNHVNAMVQEQENNTSSVTAIDAGMVKEEQNNNGDQSKDYYEGSSTGEDLSLVWQETMMFDDHQNHYYCGETSTTSHQFGFIDNDDQFSSFFDSYCADYERTSAM.

Positions 109–130 are disordered; it reads PVSCNGGDSGESKKKRLGVGKG. Residues 121–130 are compositionally biased toward basic residues; sequence KKKRLGVGKG. A DNA-binding region (WRKY) is located at residues 146 to 214; that stretch reads VEAKSSEDRY…YIGYHTCTAN (69 aa). Residues 267-282 show a composition bias toward basic and acidic residues; sequence VKEEQNNNGDQSKDYY. The interval 267-286 is disordered; the sequence is VKEEQNNNGDQSKDYYEGSS.

This sequence belongs to the WRKY group III family. In terms of assembly, interacts with WRKY30. Binds to BZR2/BES1 to cooperatively regulate the expression of target genes. Interacts with ASK7/BIN2. Phosphorylated and destabilized by ASK7/BIN2. In terms of tissue distribution, expressed in leaves.

The protein resides in the nucleus. Functionally, transcription factor. Interacts specifically with the W box (5'-(T)TGAC[CT]-3'), a frequently occurring elicitor-responsive cis-acting element. Together with WRKY70, negative regulator of developmental senescence, probably via the regulation of several senescence-associated markers genes. Positive regulator of EDS1-dependent defense against E.amylovora. In collaboration with WRKY70, prevents stomatal closure and, consequently, osmotic stress tolerance. Together with WRKY46 and WRKY70, promotes brassinosteroid (BR)-regulated plant growth but prevent drought response by modulating gene expression. Negative regulator of SA biosynthesis. Prevents defense response to the necrotrophic pathogens P.carotovorum and B.cinerea, but promotes defense against biotrophic/hemibiotrophic pathogens P.syringae pv. tomato (Pst) DC3000, probably by regulating negatively the jasmonic acid (JA)/ethylene (ET) and positively the salicylic acid (SA) signaling pathways. The sequence is that of Probable WRKY transcription factor 54 from Arabidopsis thaliana (Mouse-ear cress).